We begin with the raw amino-acid sequence, 115 residues long: General stress protein 17M (115 aa).

The polypeptide is General stress protein 17M (yflT) (Bacillus subtilis (strain 168)).